The sequence spans 326 residues: Isoaspartyl peptidase/L-asparaginase (326 aa).

Threonine 185 functions as the Nucleophile in the catalytic mechanism. Residues 213–216 and 236–239 each bind substrate; these read RVGD and TGHG.

It belongs to the Ntn-hydrolase family. Heterodimer of an alpha and beta chain produced by autocleavage. This heterodimer may then dimerize in turn, giving rise to a heterotetramer. Post-translationally, cleaved into an alpha and beta chain by autocatalysis; this activates the enzyme. The N-terminal residue of the beta subunit is responsible for the nucleophile hydrolase activity. In terms of tissue distribution, high expression in the heart and brain while low to minimal expression in the other tissues. In ocular tissues, high levels is observed in the optic nerve and retina while relatively low levels of expression are detected in the iris-ciliary body, lens or retinal pigment epithelium.

The protein resides in the cytoplasm. The catalysed reaction is L-asparagine + H2O = L-aspartate + NH4(+). It catalyses the reaction Cleavage of a beta-linked Asp residue from the N-terminus of a polypeptide.. Its function is as follows. Has both L-asparaginase and beta-aspartyl peptidase activity. May be involved in the production of L-aspartate, which can act as an excitatory neurotransmitter in some brain regions. Is highly active with L-Asp beta-methyl ester. Besides, has catalytic activity toward beta-aspartyl dipeptides and their methyl esters, including beta-L-Asp-L-Phe, beta-L-Asp-L-Phe methyl ester (aspartame), beta-L-Asp-L-Ala, beta-L-Asp-L-Leu and beta-L-Asp-L-Lys. Does not have aspartylglucosaminidase activity and is inactive toward GlcNAc-L-Asn. Likewise, has no activity toward glutamine. This Mus musculus (Mouse) protein is Isoaspartyl peptidase/L-asparaginase (Asrgl1).